A 241-amino-acid chain; its full sequence is Uridylate kinase (241 aa).

Position 9–10 (glycine 9–serine 10) interacts with ATP. Glycine 44 provides a ligand contact to UMP. Residues glycine 45 and arginine 49 each contribute to the ATP site. Residues aspartate 66 and valine 114–threonine 120 contribute to the UMP site. ATP is bound by residues threonine 140, phenylalanine 146, and aspartate 149.

It belongs to the UMP kinase family. As to quaternary structure, homohexamer.

It is found in the cytoplasm. The enzyme catalyses UMP + ATP = UDP + ADP. It functions in the pathway pyrimidine metabolism; CTP biosynthesis via de novo pathway; UDP from UMP (UMPK route): step 1/1. Its activity is regulated as follows. Inhibited by UTP. Catalyzes the reversible phosphorylation of UMP to UDP. The chain is Uridylate kinase from Halobacterium salinarum (strain ATCC 29341 / DSM 671 / R1).